Here is a 697-residue protein sequence, read N- to C-terminus: ATP-dependent zinc metalloprotease FtsH (697 aa).

The tract at residues 1–23 is disordered; sequence MSQNERDSLELERKNTPPDGPRL. Residues 1-29 lie on the Cytoplasmic side of the membrane; it reads MSQNERDSLELERKNTPPDGPRLPERRPR. The chain crosses the membrane as a helical span at residues 30 to 50; sequence FSVWIYLAIFLALLVHFFLFW. The Periplasmic segment spans residues 51 to 158; sequence TGTDTSTIEY…QFTARIEENW (108 aa). The helical transmembrane segment at 159 to 179 threads the bilayer; it reads FGGLLTWIFPLILIVALWVFL. Residues 180–697 lie on the Cytoplasmic side of the membrane; sequence LRRMSPSSQV…TERPESSSAP (518 aa). 251–258 is a binding site for ATP; the sequence is GPPGTGKT. Histidine 474 contacts Zn(2+). Residue glutamate 475 is part of the active site. Histidine 478 and aspartate 550 together coordinate Zn(2+). Residues 649–697 are disordered; the sequence is GPRPYGDYPSPNGKDVEELKDLQKGEPTSSSAVEAPAPQTERPESSSAP. The segment covering 662-672 has biased composition (basic and acidic residues); that stretch reads KDVEELKDLQK.

This sequence in the central section; belongs to the AAA ATPase family. In the C-terminal section; belongs to the peptidase M41 family. As to quaternary structure, homohexamer. Requires Zn(2+) as cofactor.

It is found in the cell inner membrane. Acts as a processive, ATP-dependent zinc metallopeptidase for both cytoplasmic and membrane proteins. Plays a role in the quality control of integral membrane proteins. This chain is ATP-dependent zinc metalloprotease FtsH, found in Rhodothermus marinus (strain ATCC 43812 / DSM 4252 / R-10) (Rhodothermus obamensis).